Consider the following 283-residue polypeptide: Pantothenate synthetase (283 aa).

31-38 contributes to the ATP binding site; that stretch reads MGALHEGH. The active-site Proton donor is the His-38. Position 62 (Gln-62) interacts with (R)-pantoate. Gln-62 contacts beta-alanine. An ATP-binding site is contributed by 148–151; that stretch reads GKKD. (R)-pantoate is bound at residue Gln-154. ATP contacts are provided by residues Val-177 and 185–188; that span reads RSSR.

This sequence belongs to the pantothenate synthetase family. As to quaternary structure, homodimer.

It localises to the cytoplasm. It carries out the reaction (R)-pantoate + beta-alanine + ATP = (R)-pantothenate + AMP + diphosphate + H(+). It participates in cofactor biosynthesis; (R)-pantothenate biosynthesis; (R)-pantothenate from (R)-pantoate and beta-alanine: step 1/1. Its function is as follows. Catalyzes the condensation of pantoate with beta-alanine in an ATP-dependent reaction via a pantoyl-adenylate intermediate. The polypeptide is Pantothenate synthetase (Staphylococcus haemolyticus (strain JCSC1435)).